Here is a 711-residue protein sequence, read N- to C-terminus: Ribosomal RNA large subunit methyltransferase K/L (711 aa).

The THUMP domain occupies 43–154; that stretch reads TLYRTLLWSR…RENLVISLDL (112 aa).

Belongs to the methyltransferase superfamily. RlmKL family.

It localises to the cytoplasm. The catalysed reaction is guanosine(2445) in 23S rRNA + S-adenosyl-L-methionine = N(2)-methylguanosine(2445) in 23S rRNA + S-adenosyl-L-homocysteine + H(+). It carries out the reaction guanosine(2069) in 23S rRNA + S-adenosyl-L-methionine = N(2)-methylguanosine(2069) in 23S rRNA + S-adenosyl-L-homocysteine + H(+). In terms of biological role, specifically methylates the guanine in position 2445 (m2G2445) and the guanine in position 2069 (m7G2069) of 23S rRNA. The sequence is that of Ribosomal RNA large subunit methyltransferase K/L from Haemophilus influenzae (strain ATCC 51907 / DSM 11121 / KW20 / Rd).